A 335-amino-acid polypeptide reads, in one-letter code: Replication factor C subunit 4 (335 aa).

56–63 (SGPPGTGK) lines the ATP pocket.

Belongs to the activator 1 small subunits family. In terms of assembly, heterotetramer of subunits RFC2, RFC3, RFC4 and RFC5 that can form a complex with RFC1. In terms of tissue distribution, expressed in roots, leaves, shoot apical meristem (SAM), flag leaves and panicles.

The protein localises to the nucleus. May be involved in DNA replication and thus regulate cell proliferation. This Oryza sativa subsp. japonica (Rice) protein is Replication factor C subunit 4 (RFC4).